Here is a 654-residue protein sequence, read N- to C-terminus: Fructose-1,6-bisphosphatase class 3 (654 aa).

The segment at 288-307 is disordered; the sequence is NPAFKPKKRPDKHERLTQRE. Basic and acidic residues predominate over residues 298 to 307; it reads DKHERLTQRE.

Belongs to the FBPase class 3 family. Mn(2+) is required as a cofactor.

The catalysed reaction is beta-D-fructose 1,6-bisphosphate + H2O = beta-D-fructose 6-phosphate + phosphate. The protein operates within carbohydrate biosynthesis; gluconeogenesis. In Staphylococcus aureus (strain MRSA252), this protein is Fructose-1,6-bisphosphatase class 3.